The following is a 149-amino-acid chain: Protein FAM72A (149 aa).

It belongs to the FAM72 family. Interacts with UNG. In terms of tissue distribution, may be up-regulated in malignant colon cancers, compared to normal colon and colon adenomas. Expression is also elevated in other common cancer types, including breast, lung, uterus, and ovary.

The protein localises to the cytoplasm. Its subcellular location is the mitochondrion. May play a role in the regulation of cellular reactive oxygen species metabolism. May participate in cell growth regulation. The polypeptide is Protein FAM72A (FAM72A) (Homo sapiens (Human)).